An 87-amino-acid chain; its full sequence is Toxin RelG (87 aa).

The protein belongs to the RelE toxin family. Interacts with cognate antitoxin RelF, which neutralizes the toxin. Also interacts with non-cognate antitoxin RelB in vitro, in M.smegmatis this neutralizes the toxicity of this toxin.

Toxic component of a type II toxin-antitoxin (TA) system. Has RNase activity and preferentially cleaves at the 3'-end of purine ribonucleotides. Overexpression in M.tuberculosis or M.smegmatis inhibits colony formation in a bacteriostatic rather than bacteriocidal fashion. Its toxic effect is neutralized by coexpression with cognate antitoxin RelB2 (shown only for M.smegmatis). Overexpression also increases the number of gentamicin-tolerant and levofloxacin-tolerant persister cells. In terms of biological role, in combination with cognate antitoxin RelF represses its own promoter. Has been seen to bind DNA in complex with antitoxin RelF but not alone. This chain is Toxin RelG (relG), found in Mycobacterium tuberculosis (strain ATCC 25618 / H37Rv).